The chain runs to 446 residues: Exodeoxyribonuclease 7 large subunit (446 aa).

Belongs to the XseA family. As to quaternary structure, heterooligomer composed of large and small subunits.

Its subcellular location is the cytoplasm. The catalysed reaction is Exonucleolytic cleavage in either 5'- to 3'- or 3'- to 5'-direction to yield nucleoside 5'-phosphates.. In terms of biological role, bidirectionally degrades single-stranded DNA into large acid-insoluble oligonucleotides, which are then degraded further into small acid-soluble oligonucleotides. The protein is Exodeoxyribonuclease 7 large subunit of Geotalea uraniireducens (strain Rf4) (Geobacter uraniireducens).